Here is an 866-residue protein sequence, read N- to C-terminus: Rifampicin phosphotransferase (866 aa).

Positions 1-313 (MSSLVLGLHE…FYIVQSRPIT (313 aa)) are ATP-binding. 8 residues coordinate ATP: K22, R116, G131, T135, Q182, E296, Q308, and R310. Residues 326 to 754 (NHVYISVGHQ…TSDGEIVTGE (429 aa)) form a rifampicin-binding region. The disordered stretch occupies residues 410-429 (IPNDKTAPNPSRGNADMPAQ). Positions 767–865 (GLPVSSGVIE…VHGTEGYIEI (99 aa)) are swivel phosphohistidine. Residue H825 is the Tele-phosphohistidine intermediate of the active site.

This sequence belongs to the rifampicin phosphotransferase family.

It carries out the reaction rifampicin + ATP + H2O = 21-phosphorifampicin + AMP + phosphate + 2 H(+). Functionally, catalyzes the phosphorylation of rifampicin, also known as rifampin (RIF), leading to its inactivation. This is Rifampicin phosphotransferase from Bacillus subtilis (strain 168).